Here is a 441-residue protein sequence, read N- to C-terminus: Deoxyguanosinetriphosphate triphosphohydrolase-like protein (441 aa).

Residues Met-1–Arg-27 are disordered. Residues Gln-7–Arg-27 are compositionally biased toward basic and acidic residues. In terms of domain architecture, HD spans Arg-59 to Ala-252.

The protein belongs to the dGTPase family. Type 2 subfamily.

This chain is Deoxyguanosinetriphosphate triphosphohydrolase-like protein, found in Shewanella oneidensis (strain ATCC 700550 / JCM 31522 / CIP 106686 / LMG 19005 / NCIMB 14063 / MR-1).